The primary structure comprises 247 residues: Segregation and condensation protein A (247 aa).

It belongs to the ScpA family. Component of a cohesin-like complex composed of ScpA, ScpB and the Smc homodimer, in which ScpA and ScpB bind to the head domain of Smc. The presence of the three proteins is required for the association of the complex with DNA.

It is found in the cytoplasm. Participates in chromosomal partition during cell division. May act via the formation of a condensin-like complex containing Smc and ScpB that pull DNA away from mid-cell into both cell halves. The polypeptide is Segregation and condensation protein A (Lactobacillus johnsonii (strain CNCM I-12250 / La1 / NCC 533)).